Consider the following 94-residue polypeptide: Large ribosomal subunit protein eL33 (94 aa).

It belongs to the eukaryotic ribosomal protein eL33 family.

This Aeropyrum pernix (strain ATCC 700893 / DSM 11879 / JCM 9820 / NBRC 100138 / K1) protein is Large ribosomal subunit protein eL33.